Consider the following 180-residue polypeptide: Acireductone dioxygenase (180 aa).

Fe(2+) is bound by residues His97, His99, Glu103, and His141. 4 residues coordinate Ni(2+): His97, His99, Glu103, and His141.

The protein belongs to the acireductone dioxygenase (ARD) family. As to quaternary structure, monomer. The cofactor is Fe(2+). Ni(2+) is required as a cofactor.

The enzyme catalyses 1,2-dihydroxy-5-(methylsulfanyl)pent-1-en-3-one + O2 = 3-(methylsulfanyl)propanoate + CO + formate + 2 H(+). The catalysed reaction is 1,2-dihydroxy-5-(methylsulfanyl)pent-1-en-3-one + O2 = 4-methylsulfanyl-2-oxobutanoate + formate + 2 H(+). Its pathway is amino-acid biosynthesis; L-methionine biosynthesis via salvage pathway; L-methionine from S-methyl-5-thio-alpha-D-ribose 1-phosphate: step 5/6. In terms of biological role, catalyzes 2 different reactions between oxygen and the acireductone 1,2-dihydroxy-3-keto-5-methylthiopentene (DHK-MTPene) depending upon the metal bound in the active site. Fe-containing acireductone dioxygenase (Fe-ARD) produces formate and 2-keto-4-methylthiobutyrate (KMTB), the alpha-ketoacid precursor of methionine in the methionine recycle pathway. Ni-containing acireductone dioxygenase (Ni-ARD) produces methylthiopropionate, carbon monoxide and formate, and does not lie on the methionine recycle pathway. This Acidiphilium cryptum (strain JF-5) protein is Acireductone dioxygenase.